Consider the following 1380-residue polypeptide: DNA-directed RNA polymerase subunit beta (1380 aa).

The protein belongs to the RNA polymerase beta chain family. In terms of assembly, the RNAP catalytic core consists of 2 alpha, 1 beta, 1 beta' and 1 omega subunit. When a sigma factor is associated with the core the holoenzyme is formed, which can initiate transcription.

It carries out the reaction RNA(n) + a ribonucleoside 5'-triphosphate = RNA(n+1) + diphosphate. Its function is as follows. DNA-dependent RNA polymerase catalyzes the transcription of DNA into RNA using the four ribonucleoside triphosphates as substrates. This Ehrlichia canis (strain Jake) protein is DNA-directed RNA polymerase subunit beta.